A 262-amino-acid chain; its full sequence is Acyl-[acyl-carrier-protein]--UDP-N-acetylglucosamine O-acyltransferase (262 aa).

This sequence belongs to the transferase hexapeptide repeat family. LpxA subfamily. As to quaternary structure, homotrimer.

The protein localises to the cytoplasm. It catalyses the reaction a (3R)-hydroxyacyl-[ACP] + UDP-N-acetyl-alpha-D-glucosamine = a UDP-3-O-[(3R)-3-hydroxyacyl]-N-acetyl-alpha-D-glucosamine + holo-[ACP]. It participates in glycolipid biosynthesis; lipid IV(A) biosynthesis; lipid IV(A) from (3R)-3-hydroxytetradecanoyl-[acyl-carrier-protein] and UDP-N-acetyl-alpha-D-glucosamine: step 1/6. In terms of biological role, involved in the biosynthesis of lipid A, a phosphorylated glycolipid that anchors the lipopolysaccharide to the outer membrane of the cell. This chain is Acyl-[acyl-carrier-protein]--UDP-N-acetylglucosamine O-acyltransferase, found in Paraburkholderia xenovorans (strain LB400).